The sequence spans 435 residues: MTGYYQLLGSIVLIGLGGLFAAIDAAISTVSPARVDELVRDQRPGAGSLRKVMADRPRYVNLVVLLRTSCEITATALLVVFIRYHFSMVWGLYLAAGIMVLASFVVVGVGPRTLGRQNAYSISLATALPLRLISWLLMPISRLLVLLGNALTPGRGFRNGPFASEIELREVVDLAQQRGVVAADERRMIESVFELGDTPAREVMVPRTEMIWIESDKTAGQAMTLAVRSGHSRIPVIGENVDDIVGVVYLKDLVEQTFCSTNGGRETTVARVMRPAVFVPDSKPLDALLREMQRDRNHMALLVDEYGAIAGLVSIEDVLEEIVGEIADEYDQAETAPVEDLGDKRFRVSARLPIEDVGELYGVEFDDDLDVDTVGGLLALELGRVPLPGAEVISHGLRLHAEGGTDHRGRVRIGTVLLSPAEPDGADDEEADHPG.

The CNNM transmembrane domain maps to 1 to 185 (MTGYYQLLGS…QQRGVVAADE (185 aa)). Transmembrane regions (helical) follow at residues 7–27 (LLGS…DAAI) and 89–109 (VWGL…VVGV). 2 consecutive CBS domains span residues 204-267 (MVPR…GRET) and 272-329 (VMRP…IADE).

Belongs to the UPF0053 family.

Its subcellular location is the cell membrane. This Mycobacterium tuberculosis (strain ATCC 25618 / H37Rv) protein is UPF0053 protein Rv2366c.